A 184-amino-acid polypeptide reads, in one-letter code: Ribosome-recycling factor (184 aa).

Belongs to the RRF family.

It localises to the cytoplasm. Responsible for the release of ribosomes from messenger RNA at the termination of protein biosynthesis. May increase the efficiency of translation by recycling ribosomes from one round of translation to another. The protein is Ribosome-recycling factor of Clostridium botulinum (strain ATCC 19397 / Type A).